The primary structure comprises 430 residues: 4-hydroxy-3-methylbut-2-en-1-yl diphosphate synthase (flavodoxin) (430 aa).

Residues C310, C313, C356, and E363 each contribute to the [4Fe-4S] cluster site.

The protein belongs to the IspG family. [4Fe-4S] cluster is required as a cofactor.

It catalyses the reaction (2E)-4-hydroxy-3-methylbut-2-enyl diphosphate + oxidized [flavodoxin] + H2O + 2 H(+) = 2-C-methyl-D-erythritol 2,4-cyclic diphosphate + reduced [flavodoxin]. It functions in the pathway isoprenoid biosynthesis; isopentenyl diphosphate biosynthesis via DXP pathway; isopentenyl diphosphate from 1-deoxy-D-xylulose 5-phosphate: step 5/6. Its function is as follows. Converts 2C-methyl-D-erythritol 2,4-cyclodiphosphate (ME-2,4cPP) into 1-hydroxy-2-methyl-2-(E)-butenyl 4-diphosphate. The chain is 4-hydroxy-3-methylbut-2-en-1-yl diphosphate synthase (flavodoxin) from Nitrobacter winogradskyi (strain ATCC 25391 / DSM 10237 / CIP 104748 / NCIMB 11846 / Nb-255).